The primary structure comprises 460 residues: ATP synthase subunit beta (460 aa).

150–157 lines the ATP pocket; sequence GGAGVGKT.

Belongs to the ATPase alpha/beta chains family. As to quaternary structure, F-type ATPases have 2 components, CF(1) - the catalytic core - and CF(0) - the membrane proton channel. CF(1) has five subunits: alpha(3), beta(3), gamma(1), delta(1), epsilon(1). CF(0) has three main subunits: a(1), b(2) and c(9-12). The alpha and beta chains form an alternating ring which encloses part of the gamma chain. CF(1) is attached to CF(0) by a central stalk formed by the gamma and epsilon chains, while a peripheral stalk is formed by the delta and b chains.

It is found in the cell inner membrane. It catalyses the reaction ATP + H2O + 4 H(+)(in) = ADP + phosphate + 5 H(+)(out). Produces ATP from ADP in the presence of a proton gradient across the membrane. The catalytic sites are hosted primarily by the beta subunits. The chain is ATP synthase subunit beta from Proteus mirabilis (strain HI4320).